The following is a 365-amino-acid chain: Probable ethanolamine-phosphate cytidylyltransferase (365 aa).

Residues 344-365 are disordered; sequence EERQRRKMGKNATEQTTIKTYA. Polar residues predominate over residues 355–365; it reads ATEQTTIKTYA.

The protein belongs to the cytidylyltransferase family.

The catalysed reaction is phosphoethanolamine + CTP + H(+) = CDP-ethanolamine + diphosphate. The protein operates within phospholipid metabolism; phosphatidylethanolamine biosynthesis; phosphatidylethanolamine from ethanolamine: step 2/3. In Schizosaccharomyces pombe (strain 972 / ATCC 24843) (Fission yeast), this protein is Probable ethanolamine-phosphate cytidylyltransferase.